A 433-amino-acid chain; its full sequence is 3-deoxy-D-manno-octulosonic acid transferase (433 aa).

A helical; Signal-anchor membrane pass occupies residues T11 to Y31. The active-site Proton acceptor is E70. CMP contacts are provided by residues P277 to R278, I317 to W319, and N344 to E347.

Belongs to the glycosyltransferase group 1 family. Glycosyltransferase 30 subfamily.

The protein localises to the cell inner membrane. It catalyses the reaction lipid IVA (E. coli) + CMP-3-deoxy-beta-D-manno-octulosonate = alpha-Kdo-(2-&gt;6)-lipid IVA (E. coli) + CMP + H(+). The catalysed reaction is alpha-Kdo-(2-&gt;6)-lipid IVA (E. coli) + CMP-3-deoxy-beta-D-manno-octulosonate = alpha-Kdo-(2-&gt;4)-alpha-Kdo-(2-&gt;6)-lipid IVA (E. coli) + CMP + H(+). It carries out the reaction alpha-Kdo-(2-&gt;4)-alpha-Kdo-(2-&gt;6)-lipid IVA (E. coli) + CMP-3-deoxy-beta-D-manno-octulosonate = alpha-Kdo-(2-&gt;8)-alpha-Kdo-(2-&gt;4)-alpha-Kdo-(2-&gt;6)-lipid IVA (E. coli) + CMP + H(+). The enzyme catalyses alpha-Kdo-(2-&gt;8)-alpha-Kdo-(2-&gt;4)-alpha-Kdo-(2-&gt;6)-lipid IVA (E. coli) + CMP-3-deoxy-beta-D-manno-octulosonate = alpha-Kdo-(2-&gt;8)-[alpha-Kdo-(2-&gt;4)]-alpha-Kdo-(2-&gt;4)-alpha-Kdo-(2-&gt;6)-lipid IVA + CMP + H(+). Its pathway is bacterial outer membrane biogenesis; LPS core biosynthesis. Involved in lipopolysaccharide (LPS) biosynthesis. Catalyzes the transfer of predominantly four 3-deoxy-D-manno-octulosonate (Kdo) residues from CMP-Kdo to lipid IV(A), the tetraacyldisaccharide-1,4'-bisphosphate precursor of lipid A. Thus generates the genus-specific LPS epitope of Chlamydia, composed of the trisaccharide alpha-Kdo-(2-&gt;8)-alpha-Kdo-(2-&gt;4)-alpha-Kdo. The polypeptide is 3-deoxy-D-manno-octulosonic acid transferase (waaA) (Chlamydophila psittaci (strain ATCC VR-125 / 6BC) (Chlamydia psittaci)).